The sequence spans 171 residues: Small ribosomal subunit protein mS25 (171 aa).

It belongs to the mitochondrion-specific ribosomal protein mS25 family. In terms of assembly, component of the mitochondrial ribosome small subunit (28S) which comprises a 12S rRNA and about 30 distinct proteins.

It is found in the mitochondrion. The polypeptide is Small ribosomal subunit protein mS25 (Mrps25) (Mus musculus (Mouse)).